The chain runs to 389 residues: Acetylornithine deacetylase (389 aa).

Position 85 (His85) interacts with Zn(2+). Asp87 is an active-site residue. Asp117 contacts Zn(2+). Glu149 is a catalytic residue. Residues Glu150, Glu174, and His360 each coordinate Zn(2+).

This sequence belongs to the peptidase M20A family. ArgE subfamily. As to quaternary structure, homodimer. Requires Zn(2+) as cofactor. The cofactor is Co(2+). Glutathione is required as a cofactor.

It is found in the cytoplasm. The catalysed reaction is N(2)-acetyl-L-ornithine + H2O = L-ornithine + acetate. Its pathway is amino-acid biosynthesis; L-arginine biosynthesis; L-ornithine from N(2)-acetyl-L-ornithine (linear): step 1/1. Functionally, catalyzes the hydrolysis of the amide bond of N(2)-acetylated L-amino acids. Cleaves the acetyl group from N-acetyl-L-ornithine to form L-ornithine, an intermediate in L-arginine biosynthesis pathway, and a branchpoint in the synthesis of polyamines. The chain is Acetylornithine deacetylase from Yersinia pseudotuberculosis serotype O:1b (strain IP 31758).